The chain runs to 358 residues: UDP-N-acetylglucosamine--N-acetylmuramyl-(pentapeptide) pyrophosphoryl-undecaprenol N-acetylglucosamine transferase (358 aa).

UDP-N-acetyl-alpha-D-glucosamine-binding positions include 11-13, asparagine 120, arginine 161, serine 188, and glutamine 282; that span reads TGG.

It belongs to the glycosyltransferase 28 family. MurG subfamily.

Its subcellular location is the cell inner membrane. The catalysed reaction is di-trans,octa-cis-undecaprenyl diphospho-N-acetyl-alpha-D-muramoyl-L-alanyl-D-glutamyl-meso-2,6-diaminopimeloyl-D-alanyl-D-alanine + UDP-N-acetyl-alpha-D-glucosamine = di-trans,octa-cis-undecaprenyl diphospho-[N-acetyl-alpha-D-glucosaminyl-(1-&gt;4)]-N-acetyl-alpha-D-muramoyl-L-alanyl-D-glutamyl-meso-2,6-diaminopimeloyl-D-alanyl-D-alanine + UDP + H(+). Its pathway is cell wall biogenesis; peptidoglycan biosynthesis. Functionally, cell wall formation. Catalyzes the transfer of a GlcNAc subunit on undecaprenyl-pyrophosphoryl-MurNAc-pentapeptide (lipid intermediate I) to form undecaprenyl-pyrophosphoryl-MurNAc-(pentapeptide)GlcNAc (lipid intermediate II). The sequence is that of UDP-N-acetylglucosamine--N-acetylmuramyl-(pentapeptide) pyrophosphoryl-undecaprenol N-acetylglucosamine transferase from Synechococcus sp. (strain CC9311).